The primary structure comprises 721 residues: K(+)-insensitive pyrophosphate-energized proton pump (721 aa).

5 helical membrane-spanning segments follow: residues 8–28, 57–77, 82–102, 136–156, and 168–188; these read LLGVILGISGVIYAVYLAVWV, YRTLAVLLVILAVLILVAIDM, FGLTALAFIVGALGSMLAGYL, VMGLSLASIALLLISGFYLVF, and LVALGFGASLVTLFMRVGGGI. Lys-191 is a binding site for substrate. Positions 194, 198, 221, and 224 each coordinate Mg(2+). 5 consecutive transmembrane segments (helical) span residues 247–267, 294–314, 323–343, 374–394, and 416–436; these read AIFLAAILGLPTQFIEAIILF, ISLAIYATIGLSVVLFFIGAF, ALALAATTSLGAVIAPLIVKI, YGVGLMSAIPVIAVIVAVLGI, and AGIFGTAMASVGLLVVAGIII. Asp-446 is a Mg(2+) binding site. 4 consecutive transmembrane segments (helical) span residues 483–503, 527–547, 599–619, and 621–641; these read AIASAALAALVLFIALIFEIV, LINANVLIGAFLGVALVYFFS, FLIPGLAAIVLPLITGLLLGW, and ALAGLIMGAIVAGVPRALLMA. Asp-648, Asp-672, and Asp-676 together coordinate Ca(2+). Lys-679 contributes to the substrate binding site. The chain crosses the membrane as a helical span at residues 698-718; that stretch reads VVFTYVIVSTNIALGIWPSGL.

Belongs to the H(+)-translocating pyrophosphatase (TC 3.A.10) family. K(+)-insensitive subfamily. As to quaternary structure, homodimer. It depends on Mg(2+) as a cofactor.

The protein resides in the cell membrane. The enzyme catalyses diphosphate + H2O + H(+)(in) = 2 phosphate + 2 H(+)(out). Proton pump that utilizes the energy of pyrophosphate hydrolysis as the driving force for proton movement across the membrane. Generates a proton motive force. The protein is K(+)-insensitive pyrophosphate-energized proton pump of Pyrobaculum aerophilum (strain ATCC 51768 / DSM 7523 / JCM 9630 / CIP 104966 / NBRC 100827 / IM2).